Reading from the N-terminus, the 74-residue chain is ATP synthase subunit 9, mitochondrial (74 aa).

2 helical membrane-spanning segments follow: residues 8–28 and 50–70; these read IGAG…GNVF and ILGF…AFLI.

It belongs to the ATPase C chain family. As to quaternary structure, F-type ATPases have 2 components, CF(1) - the catalytic core - and CF(0) - the membrane proton channel. CF(1) has five subunits: alpha(3), beta(3), gamma(1), delta(1), epsilon(1). CF(0) has three main subunits: a, b and c.

It localises to the mitochondrion membrane. This protein is one of the chains of the nonenzymatic membrane component (F0) of mitochondrial ATPase. This is ATP synthase subunit 9, mitochondrial (ATP9) from Triticum aestivum (Wheat).